Consider the following 303-residue polypeptide: Recombination-associated protein RdgC (303 aa).

The protein belongs to the RdgC family.

It localises to the cytoplasm. Its subcellular location is the nucleoid. In terms of biological role, may be involved in recombination. The protein is Recombination-associated protein RdgC of Salmonella newport (strain SL254).